The sequence spans 336 residues: Ribosomal RNA large subunit methyltransferase F (336 aa).

Belongs to the methyltransferase superfamily. METTL16/RlmF family.

It localises to the cytoplasm. It catalyses the reaction adenosine(1618) in 23S rRNA + S-adenosyl-L-methionine = N(6)-methyladenosine(1618) in 23S rRNA + S-adenosyl-L-homocysteine + H(+). Functionally, specifically methylates the adenine in position 1618 of 23S rRNA. In Serratia proteamaculans (strain 568), this protein is Ribosomal RNA large subunit methyltransferase F.